A 129-amino-acid chain; its full sequence is Small ribosomal subunit protein uS11c (129 aa).

Belongs to the universal ribosomal protein uS11 family. In terms of assembly, part of the 30S ribosomal subunit.

The protein resides in the plastid. Its subcellular location is the chloroplast. The sequence is that of Small ribosomal subunit protein uS11c from Cyanidium caldarium (Red alga).